The primary structure comprises 342 residues: Protein-glutamate methylesterase/protein-glutamine glutaminase 1 (342 aa).

One can recognise a Response regulatory domain in the interval 2-119 (RVAIVNDMPL…GDPKAAAQRL (118 aa)). Asp-53 is modified (4-aspartylphosphate). One can recognise a CheB-type methylesterase domain in the interval 146 to 329 (SDTDAALVVI…LPLGDIAPRL (184 aa)). Residues Ser-158, His-185, and Asp-278 contribute to the active site.

The protein belongs to the CheB family. In terms of processing, phosphorylated by CheA. Phosphorylation of the N-terminal regulatory domain activates the methylesterase activity.

Its subcellular location is the cytoplasm. It catalyses the reaction [protein]-L-glutamate 5-O-methyl ester + H2O = L-glutamyl-[protein] + methanol + H(+). It carries out the reaction L-glutaminyl-[protein] + H2O = L-glutamyl-[protein] + NH4(+). Its function is as follows. Involved in chemotaxis. Part of a chemotaxis signal transduction system that modulates chemotaxis in response to various stimuli. Catalyzes the demethylation of specific methylglutamate residues introduced into the chemoreceptors (methyl-accepting chemotaxis proteins or MCP) by CheR. Also mediates the irreversible deamidation of specific glutamine residues to glutamic acid. This Bordetella avium (strain 197N) protein is Protein-glutamate methylesterase/protein-glutamine glutaminase 1.